A 332-amino-acid chain; its full sequence is Melanocortin receptor 4 (332 aa).

Residues 1-43 (MNSTQPLGMHTSLHSWNRSAHGMPTNVSESLAKGYSDGGCYEQ) lie on the Extracellular side of the membrane. N-linked (GlcNAc...) asparagine glycans are attached at residues Asn-2, Asn-17, and Asn-26. 2 disulfides stabilise this stretch: Cys-40-Cys-279 and Cys-271-Cys-277. The helical transmembrane segment at 44–69 (LFVSPEVFVTLGVISLLENILVIVAI) threads the bilayer. At 70–81 (AKNKNLHSPMYF) the chain is on the cytoplasmic side. The helical transmembrane segment at 82–106 (FICSLAVADMLVSVSNGSETIVITL) threads the bilayer. Ca(2+) is bound by residues Glu-100, Asp-122, and Asp-126. Residues 107–123 (LNSTDTDAQSFTVDIDN) lie on the Extracellular side of the membrane. Residues 124–145 (VIDSVICSSLLASICSLLSIAV) form a helical membrane-spanning segment. Residues 146–165 (DRYFTIFYALQYHNIMTVKR) are Cytoplasmic-facing. The helical transmembrane segment at 166–186 (VAITISAIWAACTVSGVLFII) threads the bilayer. The Extracellular portion of the chain corresponds to 187 to 191 (YSDSS). The helical transmembrane segment at 192–215 (AVIICLITVFFTMLALMASLYVHM) threads the bilayer. Over 216–248 (FLMARLHIKRIAVLPGSGTIRQGANMKGAITLT) the chain is Cytoplasmic. The helical transmembrane segment at 249-271 (ILIGVFVVCWAPFFLHLIFYISC) threads the bilayer. Over 272-280 (PQNPYCVCF) the chain is Extracellular. Residues 281 to 304 (MSHFNLYLILIMCNSIIDPLIYAL) traverse the membrane as a helical segment. At 305–332 (RSQELRKTFKEIICCSPLGGLCDLSSRY) the chain is on the cytoplasmic side. A lipid anchor (S-palmitoyl cysteine) is attached at Cys-318.

It belongs to the G-protein coupled receptor 1 family. As to quaternary structure, homodimer; disulfide-linked, also forms higher order oligomers. Interacts with GNAS. Interacts with ATRNL1. Interacts with MGRN1; this interaction competes with GNAS-binding and thus inhibits agonist-induced cAMP production. Interacts with MRAP and MRAP2; these associated factors increase ligand-sensitivity and generation of cAMP.

The protein resides in the cell membrane. Functionally, hormone receptor that acts as a key component of the leptin-melanocortin pathway at the intersection of homeostatic maintenance of energetic state. Plays a role in regulating food intake: activation by a stimulating hormone such as anorexigenic alpha-melanocyte stimulating hormone (alpha-MSH) inhibits appetite, whereas binding to a natural antagonist like Agouti-related protein/AGRP promotes appetite. G-protein-coupled receptor that activates conventional Galphas signaling leading to induction of anorexogenic signaling in the hypothalamus to result in negative energy balance. Regulates the firing activity of neurons from the hypothalamus by alpha-MSH and AGRP independently of Galphas signaling by ligand-induced coupling of closure of inwardly rectifying potassium channel KCNJ13. In intestinal epithelial cells, plays a role in the inhibition of hepatic glucose production via nesfatin-1/NUCB2 leading to increased cyclic adenosine monophosphate (cAMP) levels and glucagon-like peptide 1 (GLP-1) secretion in the intestinal epithelium. In Bos taurus (Bovine), this protein is Melanocortin receptor 4 (MC4R).